The following is a 176-amino-acid chain: NAD(P)H-quinone oxidoreductase subunit 6, chloroplastic (176 aa).

5 helical membrane passes run 10–30, 32–52, 63–83, 92–112, and 152–172; these read FLLV…VLLT, PIFS…LYIL, LLIY…FMNG, LWTV…ISLI, and FFLP…GAIV.

The protein belongs to the complex I subunit 6 family. As to quaternary structure, NDH is composed of at least 16 different subunits, 5 of which are encoded in the nucleus.

The protein localises to the plastid. It localises to the chloroplast thylakoid membrane. It carries out the reaction a plastoquinone + NADH + (n+1) H(+)(in) = a plastoquinol + NAD(+) + n H(+)(out). The catalysed reaction is a plastoquinone + NADPH + (n+1) H(+)(in) = a plastoquinol + NADP(+) + n H(+)(out). Its function is as follows. NDH shuttles electrons from NAD(P)H:plastoquinone, via FMN and iron-sulfur (Fe-S) centers, to quinones in the photosynthetic chain and possibly in a chloroplast respiratory chain. The immediate electron acceptor for the enzyme in this species is believed to be plastoquinone. Couples the redox reaction to proton translocation, and thus conserves the redox energy in a proton gradient. This Lotus japonicus (Lotus corniculatus var. japonicus) protein is NAD(P)H-quinone oxidoreductase subunit 6, chloroplastic (ndhG).